The primary structure comprises 969 residues: Manganese resistance protein MNR2 (969 aa).

Residues 1–11 are compositionally biased toward basic and acidic residues; the sequence is MSTDNSQKDEG. Disordered regions lie at residues 1–49, 96–153, 167–186, and 199–256; these read MSTD…SRRP, GAFI…DLSP, HKSF…NANN, and VNNN…NNSS. The Cytoplasmic portion of the chain corresponds to 1-912; that stretch reads MSTDNSQKDE…DMNDVLGKIT (912 aa). Low complexity predominate over residues 13–23; sequence PLLSPYSSSPQ. The segment covering 24–36 has biased composition (basic residues); sequence LRKKKRNQKRRKD. Residues 37–48 are compositionally biased toward basic and acidic residues; that stretch reads KFVGHLKSDSRR. At serine 114 the chain carries Phosphoserine. Positions 141-152 are enriched in polar residues; it reads SDQNRSLVSDLS. The residue at position 175 (serine 175) is a Phosphoserine. Threonine 177 is subject to Phosphothreonine. Residue serine 182 is modified to Phosphoserine. 2 stretches are compositionally biased toward low complexity: residues 225–234 and 244–256; these read NKNSKSTSSD and SRPS…NNSS. Serine 383 carries the post-translational modification Phosphoserine. Disordered regions lie at residues 559–662 and 746–769; these read VRRR…KPRE and QSDD…DEDA. The span at 565–578 shows a compositional bias: basic and acidic residues; the sequence is EKQESATLDHESIS. Residue threonine 571 is modified to Phosphothreonine. A phosphoserine mark is found at serine 576 and serine 582. Low complexity-rich tracts occupy residues 590–607 and 622–632; these read SNES…ASRS and ANRTTNTSSSS. The span at 749–769 shows a compositional bias: acidic residues; it reads DSSDSDSSDSDSDSGASDEDA. A helical transmembrane segment spans residues 913–933; it reads ILGTIVLPMNVITGLWGMNVI. At 934–941 the chain is on the extracellular side; that stretch reads VPGQYRDS. Residues 942 to 962 form a helical membrane-spanning segment; sequence LTWFIGIVLFMCMLACSAYMY. The Cytoplasmic segment spans residues 963-969; the sequence is TKRRFGF.

This sequence belongs to the CorA metal ion transporter (MIT) (TC 1.A.35) family.

The protein resides in the membrane. The sequence is that of Manganese resistance protein MNR2 (MNR2) from Saccharomyces cerevisiae (strain ATCC 204508 / S288c) (Baker's yeast).